Consider the following 279-residue polypeptide: Large ribosomal subunit protein uL2 (279 aa).

The disordered stretch occupies residues 218–279 (RPQTRGSAMN…ITRRKSNPKR (62 aa)). A compositionally biased stretch (basic residues) spans 255-279 (KGSKTRRKKASDKLIITRRKSNPKR).

This sequence belongs to the universal ribosomal protein uL2 family. Part of the 50S ribosomal subunit. Forms a bridge to the 30S subunit in the 70S ribosome.

One of the primary rRNA binding proteins. Required for association of the 30S and 50S subunits to form the 70S ribosome, for tRNA binding and peptide bond formation. It has been suggested to have peptidyltransferase activity; this is somewhat controversial. Makes several contacts with the 16S rRNA in the 70S ribosome. This Sulfurimonas denitrificans (strain ATCC 33889 / DSM 1251) (Thiomicrospira denitrificans (strain ATCC 33889 / DSM 1251)) protein is Large ribosomal subunit protein uL2.